The sequence spans 666 residues: ESX-1 secretion-associated protein EspI (666 aa).

Over residues 1-15 (MAADYDKLFRPHEGM) the composition is skewed to basic and acidic residues. Residues 1-378 (MAADYDKLFR…ATKPPKVVSQ (378 aa)) form a disordered region. Residues 22 to 31 (AAQPFFDPSA) show a composition bias toward low complexity. Composition is skewed to pro residues over residues 64–80 (APPPPPPPPPPPPPTPM), 87–144 (PPSP…PAPT), and 188–205 (PAPPWAKMPIGEPPPAPS). Residues 222–231 (HSRRARRGHR) show a composition bias toward basic residues. Pro residues predominate over residues 284-297 (PTRPAPTEPPPSPS). Basic residues predominate over residues 357-371 (PKVKKVKPQKPKATK). An ATP-binding site is contributed by 424–431 (LKGGAGKT).

Required to repress ESX-1-mediated secretion under low ATP conditions. This function requires the ATP-binding motif. This Mycobacterium tuberculosis (strain CDC 1551 / Oshkosh) protein is ESX-1 secretion-associated protein EspI.